The chain runs to 88 residues: DNA-directed RNA polymerase subunit omega (88 aa).

It belongs to the RNA polymerase subunit omega family. As to quaternary structure, the RNAP catalytic core consists of 2 alpha, 1 beta, 1 beta' and 1 omega subunit. When a sigma factor is associated with the core the holoenzyme is formed, which can initiate transcription.

It catalyses the reaction RNA(n) + a ribonucleoside 5'-triphosphate = RNA(n+1) + diphosphate. Promotes RNA polymerase assembly. Latches the N- and C-terminal regions of the beta' subunit thereby facilitating its interaction with the beta and alpha subunits. The protein is DNA-directed RNA polymerase subunit omega of Clostridioides difficile (strain 630) (Peptoclostridium difficile).